The chain runs to 186 residues: Adenylyl-sulfate kinase (186 aa).

ATP is bound at residue 17–24 (GLSGAGKT). Ser-91 functions as the Phosphoserine intermediate in the catalytic mechanism.

Belongs to the APS kinase family.

It carries out the reaction adenosine 5'-phosphosulfate + ATP = 3'-phosphoadenylyl sulfate + ADP + H(+). It participates in sulfur metabolism; hydrogen sulfide biosynthesis; sulfite from sulfate: step 2/3. In terms of biological role, catalyzes the synthesis of activated sulfate. This chain is Adenylyl-sulfate kinase, found in Chloroflexus aurantiacus (strain ATCC 29364 / DSM 637 / Y-400-fl).